Reading from the N-terminus, the 39-residue chain is Photosystem II reaction center protein Psb30 (39 aa).

The helical transmembrane segment at 12-32 threads the bilayer; sequence IFQLTFVGLIVIAGPIVIAVL.

This sequence belongs to the Psb30/Ycf12 family. As to quaternary structure, PSII is composed of 1 copy each of membrane proteins PsbA, PsbB, PsbC, PsbD, PsbE, PsbF, PsbH, PsbI, PsbJ, PsbK, PsbL, PsbM, PsbT, PsbX, PsbY, PsbZ, Psb30/Ycf12, peripheral proteins PsbO, CyanoQ (PsbQ), PsbU, PsbV and a large number of cofactors. It forms dimeric complexes.

It localises to the cellular thylakoid membrane. In terms of biological role, a core subunit of photosystem II (PSII), probably helps stabilize the reaction center. This Crocosphaera subtropica (strain ATCC 51142 / BH68) (Cyanothece sp. (strain ATCC 51142)) protein is Photosystem II reaction center protein Psb30.